Here is a 365-residue protein sequence, read N- to C-terminus: MATGGGGGGGGMGGGGVGGGAGAAGVGVGGRMPTWRERENNKRRERRRRAIAAKIFAGLRAHGGYKLPKHCDNNEVLKALCNEAGWVVEPDGTTYRKGYKPPERMEVIGCSVSPSPCSSYQPSPRASYNASPTSSSFPSGASSPFLPHPNNMANGVDGNPILPWLKTLSNSPSSKKHPQLPPLLIHGGSISAPVTPPLSSPTARTPRMKTDWDESNVQPTWTGSNSPCVVNSTPPSPGRTMLPDPAWLAGIQISSTSPSSPTFSLVSSNPFSVFKDAILVGNNSSRMCTPGQSGTCSPAIPGMAPHPDIHMMDAVSDEFAFGSSTNGGHQAAGLVRAWEGERIHEDSGSDDLELTLGSSRTRAAA.

Gly residues predominate over residues 1–30 (MATGGGGGGGGMGGGGVGGGAGAAGVGVGG). Disordered stretches follow at residues 1-45 (MATG…KRRE), 113-154 (SPSP…NMAN), 191-236 (SAPV…TPPS), and 344-365 (HEDS…RAAA). The tract at residues 31 to 113 (RMPTWREREN…RMEVIGCSVS (83 aa)) is required for DNA-binding. Over residues 113-144 (SPSPCSSYQPSPRASYNASPTSSSFPSGASSP) the composition is skewed to low complexity. Composition is skewed to polar residues over residues 215 to 233 (SNVQ…VNST) and 356 to 365 (LGSSRTRAAA).

It belongs to the BZR/LAT61 family. Interacts with PUB24.

May function in brassinosteroid signaling. The protein is Protein BZR1 homolog 2 of Oryza sativa subsp. japonica (Rice).